Reading from the N-terminus, the 197-residue chain is Endothelial cell-specific chemotaxis regulator (197 aa).

Positions 1 to 23 (MGSVRETQLRWAILGFLLLQAAS) are cleaved as a signal peptide. At 24 to 113 (ETPSQFSTEA…PSPTSETVLT (90 aa)) the chain is on the extracellular side. The interval 40-107 (TVADHLPSSP…ADSTVPPSPT (68 aa)) is disordered. Polar residues predominate over residues 50–63 (GPTWSQSQKHTSGL). The segment covering 64–82 (SADVPSSGRSSDSMSGDTS) has biased composition (low complexity). The span at 83-107 (HNVTSTSPNMSFRTTADSTVPPSPT) shows a compositional bias: polar residues. A helical transmembrane segment spans residues 114-134 (VAAFGVISFIAILVVVVIVLV). The Cytoplasmic segment spans residues 135-197 (SVVSLRFKCR…KGCPSAEKVL (63 aa)). Disordered regions lie at residues 146–172 (NKESEDPQKPGSSGLSESGSTANGEKE) and 178–197 (SMKNINMNNSKGCPSAEKVL). 2 stretches are compositionally biased toward polar residues: residues 155 to 168 (PGSSGLSESGSTAN) and 178 to 189 (SMKNINMNNSKG). Serine 187 is modified (phosphoserine).

This sequence belongs to the ECSCR family. Interacts with FLNA. Interacts with the 20S proteasome subunit PSMA7. Post-translationally, may be heavily O-glycosylated.

It is found in the cell membrane. The protein localises to the cytoplasm. In terms of biological role, regulates endothelial chemotaxis and tube formation. Has a role in angiogenesis and apoptosis via modulation of the actin cytoskeleton and facilitation of proteasomal degradation of the apoptosis inhibitors BIRC3/IAP1 and BIRC2/IAP2. This Bos taurus (Bovine) protein is Endothelial cell-specific chemotaxis regulator (ECSCR).